A 145-amino-acid chain; its full sequence is Ribonuclease P protein component (145 aa).

The tract at residues P121–L145 is disordered. Over residues H134–L145 the composition is skewed to polar residues.

The protein belongs to the RnpA family. As to quaternary structure, consists of a catalytic RNA component (M1 or rnpB) and a protein subunit.

The enzyme catalyses Endonucleolytic cleavage of RNA, removing 5'-extranucleotides from tRNA precursor.. In terms of biological role, RNaseP catalyzes the removal of the 5'-leader sequence from pre-tRNA to produce the mature 5'-terminus. It can also cleave other RNA substrates such as 4.5S RNA. The protein component plays an auxiliary but essential role in vivo by binding to the 5'-leader sequence and broadening the substrate specificity of the ribozyme. The protein is Ribonuclease P protein component of Xanthomonas axonopodis pv. citri (strain 306).